The following is a 307-amino-acid chain: Ribosomal RNA small subunit methyltransferase H (307 aa).

S-adenosyl-L-methionine is bound by residues 32–34 (GGH), aspartate 52, phenylalanine 78, aspartate 99, and glutamine 106.

The protein belongs to the methyltransferase superfamily. RsmH family.

It localises to the cytoplasm. The enzyme catalyses cytidine(1402) in 16S rRNA + S-adenosyl-L-methionine = N(4)-methylcytidine(1402) in 16S rRNA + S-adenosyl-L-homocysteine + H(+). Functionally, specifically methylates the N4 position of cytidine in position 1402 (C1402) of 16S rRNA. The chain is Ribosomal RNA small subunit methyltransferase H from Caldicellulosiruptor saccharolyticus (strain ATCC 43494 / DSM 8903 / Tp8T 6331).